The following is a 344-amino-acid chain: Hypoxia-inducible factor 1-alpha inhibitor (344 aa).

The residue at position 2 (alanine 2) is an N-acetylalanine. The JmjC domain occupies glycine 133 to alanine 303. Tyrosine 136 provides a ligand contact to 2-oxoglutarate. Substrate-binding positions include aspartate 143 and leucine 173–threonine 174. Threonine 187 serves as a coordination point for 2-oxoglutarate. Positions 190 and 192 each coordinate Fe cation. Position 192–194 (aspartate 192–glutamine 194) interacts with substrate. 2-oxoglutarate contacts are provided by asparagine 196 and lysine 205. Arginine 229–glutamine 230 lines the substrate pocket. Fe cation is bound at residue histidine 270. Position 285 (asparagine 285) interacts with 2-oxoglutarate. Substrate is bound by residues alanine 291 and asparagine 312.

Homodimer; homodimerization is essential for catalytic activity. Fe(2+) serves as cofactor.

The protein resides in the nucleus. Its subcellular location is the cytoplasm. It localises to the perinuclear region. It carries out the reaction L-asparaginyl-[hypoxia-inducible factor alpha subunit] + 2-oxoglutarate + O2 = (3S)-3-hydroxy-L-asparaginyl-[hypoxia-inducible factor alpha subunit] + succinate + CO2. The catalysed reaction is L-histidyl-[ankyrin-repeat domain protein] + 2-oxoglutarate + O2 = (3S)-3-hydroxy-L-histidyl-[ankyrin-repeat domain protein] + succinate + CO2. It catalyses the reaction L-asparaginyl-[ankyrin-repeat domain protein] + 2-oxoglutarate + O2 = (3S)-3-hydroxy-L-asparaginyl-[ankyrin-repeat domain protein] + succinate + CO2. The enzyme catalyses L-aspartyl-[ankyrin-repeat domain protein] + 2-oxoglutarate + O2 = (3S)-3-hydroxy-L-aspartyl-[ankyrin-repeat domain protein] + succinate + CO2. Hydroxylates a specific Asn residue in the C-terminal transactivation domain (CAD) of HIF-1 alpha. The hydroxylation prevents interaction of HIF-1 with transcriptional coactivators. Also hydroxylates specific Asn, Asp and His residues within ankyrin repeat domain-containing proteins. The chain is Hypoxia-inducible factor 1-alpha inhibitor (hif1an) from Danio rerio (Zebrafish).